The chain runs to 90 residues: MQLITRLCLLTRKHFVKRELLRLVKLDNQLEIDLNQNLKGRGYYLSVFGLKLDKKHLKAVVEKHLKVSCNDAKLTAMITALQQLAQDEKK.

This is an uncharacterized protein from Mycoplasma genitalium (strain ATCC 33530 / DSM 19775 / NCTC 10195 / G37) (Mycoplasmoides genitalium).